We begin with the raw amino-acid sequence, 283 residues long: 4-diphosphocytidyl-2-C-methyl-D-erythritol kinase (283 aa).

Lys10 is an active-site residue. ATP is bound at residue 99–109 (PMGGGLGGGSS). The active site involves Asp141.

This sequence belongs to the GHMP kinase family. IspE subfamily. Homodimer.

It carries out the reaction 4-CDP-2-C-methyl-D-erythritol + ATP = 4-CDP-2-C-methyl-D-erythritol 2-phosphate + ADP + H(+). The protein operates within isoprenoid biosynthesis; isopentenyl diphosphate biosynthesis via DXP pathway; isopentenyl diphosphate from 1-deoxy-D-xylulose 5-phosphate: step 3/6. Functionally, catalyzes the phosphorylation of the position 2 hydroxy group of 4-diphosphocytidyl-2C-methyl-D-erythritol. The sequence is that of 4-diphosphocytidyl-2-C-methyl-D-erythritol kinase from Escherichia coli O81 (strain ED1a).